The primary structure comprises 405 residues: Probable tRNA sulfurtransferase (405 aa).

The 106-residue stretch at 60–165 (TEVDKRLKKV…QDAVYISNQL (106 aa)) folds into the THUMP domain. ATP contacts are provided by residues 183-184 (ML), 208-209 (HF), Arg-265, Gly-287, and Gln-296.

It belongs to the ThiI family.

It localises to the cytoplasm. The catalysed reaction is [ThiI sulfur-carrier protein]-S-sulfanyl-L-cysteine + a uridine in tRNA + 2 reduced [2Fe-2S]-[ferredoxin] + ATP + H(+) = [ThiI sulfur-carrier protein]-L-cysteine + a 4-thiouridine in tRNA + 2 oxidized [2Fe-2S]-[ferredoxin] + AMP + diphosphate. The enzyme catalyses [ThiS sulfur-carrier protein]-C-terminal Gly-Gly-AMP + S-sulfanyl-L-cysteinyl-[cysteine desulfurase] + AH2 = [ThiS sulfur-carrier protein]-C-terminal-Gly-aminoethanethioate + L-cysteinyl-[cysteine desulfurase] + A + AMP + 2 H(+). It functions in the pathway cofactor biosynthesis; thiamine diphosphate biosynthesis. Catalyzes the ATP-dependent transfer of a sulfur to tRNA to produce 4-thiouridine in position 8 of tRNAs, which functions as a near-UV photosensor. Also catalyzes the transfer of sulfur to the sulfur carrier protein ThiS, forming ThiS-thiocarboxylate. This is a step in the synthesis of thiazole, in the thiamine biosynthesis pathway. The sulfur is donated as persulfide by IscS. The sequence is that of Probable tRNA sulfurtransferase from Lactobacillus acidophilus (strain ATCC 700396 / NCK56 / N2 / NCFM).